Consider the following 117-residue polypeptide: uncharacterized protein (117 aa).

A signal peptide spans 1-22 (MHVKYLAGIVGAALLMAGCSSS).

This is an uncharacterized protein from Escherichia coli O6:H1 (strain CFT073 / ATCC 700928 / UPEC).